The primary structure comprises 360 residues: Photosystem II protein D1 (360 aa).

A run of 3 helical transmembrane segments spans residues 30–47, 119–134, and 143–157; these read YVGW…AAAA, HFLI…QWEL, and WICV…AAFA. His-119 contacts chlorophyll a. Tyr-127 contributes to the pheophytin a binding site. Positions 171 and 190 each coordinate [CaMn4O5] cluster. Residues 198-219 traverse the membrane as a helical segment; the sequence is FHMAGVAGMFGGSLFSAMHGSL. His-199 provides a ligand contact to chlorophyll a. A quinone-binding positions include His-216 and 265–266; that span reads SF. A Fe cation-binding site is contributed by His-216. Position 273 (His-273) interacts with Fe cation. The helical transmembrane segment at 275–289 threads the bilayer; sequence FLAVFPVVCVWLTSM. Residues His-333, Glu-334, Asp-343, and Ala-345 each coordinate [CaMn4O5] cluster. Residues 346 to 360 constitute a propeptide that is removed on maturation; sequence AAESTTVALSAPAIG.

Belongs to the reaction center PufL/M/PsbA/D family. As to quaternary structure, PSII is composed of 1 copy each of membrane proteins PsbA, PsbB, PsbC, PsbD, PsbE, PsbF, PsbH, PsbI, PsbJ, PsbK, PsbL, PsbM, PsbT, PsbX, PsbY, Psb30/Ycf12, peripheral proteins PsbO, CyanoQ (PsbQ), PsbU, PsbV and a large number of cofactors. It forms dimeric complexes. It depends on The D1/D2 heterodimer binds P680, chlorophylls that are the primary electron donor of PSII, and subsequent electron acceptors. It shares a non-heme iron and each subunit binds pheophytin, quinone, additional chlorophylls, carotenoids and lipids. D1 provides most of the ligands for the Mn4-Ca-O5 cluster of the oxygen-evolving complex (OEC). There is also a Cl(-1) ion associated with D1 and D2, which is required for oxygen evolution. The PSII complex binds additional chlorophylls, carotenoids and specific lipids. as a cofactor. In terms of processing, tyr-162 forms a radical intermediate that is referred to as redox-active TyrZ, YZ or Y-Z. C-terminally processed by CtpA; processing is essential to allow assembly of the oxygen-evolving complex and thus photosynthetic growth.

The protein resides in the cellular thylakoid membrane. The catalysed reaction is 2 a plastoquinone + 4 hnu + 2 H2O = 2 a plastoquinol + O2. In terms of biological role, photosystem II (PSII) is a light-driven water:plastoquinone oxidoreductase that uses light energy to abstract electrons from H(2)O, generating O(2) and a proton gradient subsequently used for ATP formation. It consists of a core antenna complex that captures photons, and an electron transfer chain that converts photonic excitation into a charge separation. The D1/D2 (PsbA/PsbD) reaction center heterodimer binds P680, the primary electron donor of PSII as well as several subsequent electron acceptors. This Prochlorococcus marinus (strain MIT 9312) protein is Photosystem II protein D1.